The chain runs to 707 residues: Leucine-rich repeat neuronal protein 3 (707 aa).

Positions 1-22 (MKDAPLQIHVLLGLAITALVQA) are cleaved as a signal peptide. The 47-residue stretch at 23 to 69 (GDKKVDCPQLCTCEIRPWFTPRSIYMEASTVDCNDLGLLNFPARLPA) folds into the LRRNT domain. Residues 23–626 (GDKKVDCPQL…DGKENGKSHT (604 aa)) lie on the Extracellular side of the membrane. 12 LRR repeats span residues 70-91 (DTQILLLQTNNIARIEHSTDFP), 93-114 (NLTGLDLSQNNLSSVTNINVQK), 117-138 (QLLSVYLEENKLTELPEKCLYG), 141-162 (NLQELYVNHNLLSAISPGAFVG), 165-186 (NLLRLHLNSNRLQMINSKWFEA), 189-210 (NLEILMLGDNPILRIKDMNFQP), 213-234 (KLRSLVIAGINLTEVPDDALVG), 237-258 (NLESISFYDNRLNKVPQVALQK), 261-282 (NLKFLDLNKNPINRIRRGDFSN), 285-304 (HLKELGINNMPELVSIDSLA), 310-332 (DLRKIEATNNPRLSYIHPNAFFR), and 335-358 (KLESLMLNSNALSALYHGTIESLP). N-linked (GlcNAc...) asparagine glycans are attached at residues Asn-93 and Asn-103. N-linked (GlcNAc...) asparagine glycosylation is present at Asn-223. The region spanning 368-421 (NPIRCDCVIRWINMNKTNIRFMEPDSLFCVDPPEFQGQNVRQVHFRDMMEICLP) is the LRRCT domain. Residue Asn-382 is glycosylated (N-linked (GlcNAc...) asparagine). In terms of domain architecture, Ig-like C2-type spans 421–514 (PLIAPESFPS…DLKSIMIKVG (94 aa)). The cysteines at positions 444 and 496 are disulfide-linked. Asn-522, Asn-579, and Asn-608 each carry an N-linked (GlcNAc...) asparagine glycan. Positions 523-614 (GSLNIKIRDI…QCVNVTTKSL (92 aa)) constitute a Fibronectin type-III domain. Residues 627-647 (VFVACVGGLLGIIGVMCLFGC) form a helical membrane-spanning segment. The Cytoplasmic portion of the chain corresponds to 648-707 (VSQEGNCENEHSYTVNHCHKPTLAFSELYPPLINLWESSKEKPASLEVKATAIGVPTSMS).

Its subcellular location is the membrane. The polypeptide is Leucine-rich repeat neuronal protein 3 (Lrrn3) (Rattus norvegicus (Rat)).